The chain runs to 283 residues: Bifunctional protein FolD (283 aa).

Residues 163–165, Ser188, and Ile229 each bind NADP(+); that span reads GRS.

Belongs to the tetrahydrofolate dehydrogenase/cyclohydrolase family. In terms of assembly, homodimer.

It catalyses the reaction (6R)-5,10-methylene-5,6,7,8-tetrahydrofolate + NADP(+) = (6R)-5,10-methenyltetrahydrofolate + NADPH. The catalysed reaction is (6R)-5,10-methenyltetrahydrofolate + H2O = (6R)-10-formyltetrahydrofolate + H(+). Its pathway is one-carbon metabolism; tetrahydrofolate interconversion. In terms of biological role, catalyzes the oxidation of 5,10-methylenetetrahydrofolate to 5,10-methenyltetrahydrofolate and then the hydrolysis of 5,10-methenyltetrahydrofolate to 10-formyltetrahydrofolate. This chain is Bifunctional protein FolD, found in Latilactobacillus sakei subsp. sakei (strain 23K) (Lactobacillus sakei subsp. sakei).